Reading from the N-terminus, the 201-residue chain is Iron-sulfur flavoprotein AF_1896 (201 aa).

The [4Fe-4S] cluster site is built by cysteine 46, cysteine 49, cysteine 52, and cysteine 57.

It belongs to the SsuE family. Isf subfamily. Homodimer. FMN is required as a cofactor. The cofactor is [4Fe-4S] cluster.

Its function is as follows. Redox-active protein probably involved in electron transport. This Archaeoglobus fulgidus (strain ATCC 49558 / DSM 4304 / JCM 9628 / NBRC 100126 / VC-16) protein is Iron-sulfur flavoprotein AF_1896.